A 73-amino-acid chain; its full sequence is Translation initiation factor IF-1 (73 aa).

The region spanning 1–72 (MAKEEAIEKD…SKGRIVYRYK (72 aa)) is the S1-like domain.

It belongs to the IF-1 family. In terms of assembly, component of the 30S ribosomal translation pre-initiation complex which assembles on the 30S ribosome in the order IF-2 and IF-3, IF-1 and N-formylmethionyl-tRNA(fMet); mRNA recruitment can occur at any time during PIC assembly.

The protein localises to the cytoplasm. In terms of biological role, one of the essential components for the initiation of protein synthesis. Stabilizes the binding of IF-2 and IF-3 on the 30S subunit to which N-formylmethionyl-tRNA(fMet) subsequently binds. Helps modulate mRNA selection, yielding the 30S pre-initiation complex (PIC). Upon addition of the 50S ribosomal subunit IF-1, IF-2 and IF-3 are released leaving the mature 70S translation initiation complex. The sequence is that of Translation initiation factor IF-1 from Salinibacter ruber (strain DSM 13855 / M31).